Here is a 151-residue protein sequence, read N- to C-terminus: 3-hydroxyacyl-[acyl-carrier-protein] dehydratase FabZ (151 aa).

Residue His-56 is part of the active site.

It belongs to the thioester dehydratase family. FabZ subfamily.

Its subcellular location is the cytoplasm. The catalysed reaction is a (3R)-hydroxyacyl-[ACP] = a (2E)-enoyl-[ACP] + H2O. In terms of biological role, involved in unsaturated fatty acids biosynthesis. Catalyzes the dehydration of short chain beta-hydroxyacyl-ACPs and long chain saturated and unsaturated beta-hydroxyacyl-ACPs. This is 3-hydroxyacyl-[acyl-carrier-protein] dehydratase FabZ from Nitrobacter hamburgensis (strain DSM 10229 / NCIMB 13809 / X14).